The primary structure comprises 183 residues: Ferritin heavy chain (183 aa).

Met1 bears the N-acetylmethionine mark. Thr2 bears the N-acetylthreonine; in Ferritin heavy chain, N-terminally processed mark. A Ferritin-like diiron domain is found at 11 to 160 (QNYHQDSEAA…DHVTNLRKMG (150 aa)). Fe cation is bound by residues Glu28, Glu63, His66, Glu108, and Gln142. Ser179 and Ser183 each carry phosphoserine.

It belongs to the ferritin family. As to quaternary structure, oligomer of 24 subunits. There are two types of subunits: L (light) chain and H (heavy) chain. The major chain can be light or heavy, depending on the species and tissue type. The functional molecule forms a roughly spherical shell with a diameter of 12 nm and contains a central cavity into which the insoluble mineral iron core is deposited. Interacts with NCOA4; NCOA4 promotes targeting of the iron-binding ferritin complex to autolysosomes following starvation or iron depletion.

It is found in the cytoplasm. Its subcellular location is the lysosome. It localises to the cytoplasmic vesicle. The protein resides in the autophagosome. The catalysed reaction is 4 Fe(2+) + O2 + 4 H(+) = 4 Fe(3+) + 2 H2O. Functionally, stores iron in a soluble, non-toxic, readily available form. Important for iron homeostasis. Has ferroxidase activity. Iron is taken up in the ferrous form and deposited as ferric hydroxides after oxidation. Also plays a role in delivery of iron to cells. Mediates iron uptake in capsule cells of the developing kidney. Delivery to lysosomes is mediated by the cargo receptor NCOA4 for autophagic degradation and release of iron. This Felis catus (Cat) protein is Ferritin heavy chain (FTH1).